The primary structure comprises 182 residues: Carbonic anhydrase (182 aa).

Residues His64, His81, and His86 each coordinate Mg(2+).

This sequence belongs to the gamma-class carbonic anhydrase family. In terms of assembly, homotrimer. Mg(2+) is required as a cofactor. Requires Zn(2+) as cofactor.

It carries out the reaction hydrogencarbonate + H(+) = CO2 + H2O. In terms of biological role, reversible hydration of carbon dioxide. This chain is Carbonic anhydrase, found in Geobacillus kaustophilus (strain HTA426).